We begin with the raw amino-acid sequence, 150 residues long: Large ribosomal subunit protein uL15 (150 aa).

This sequence belongs to the universal ribosomal protein uL15 family. In terms of assembly, part of the 50S ribosomal subunit.

Its function is as follows. Binds to the 23S rRNA. The protein is Large ribosomal subunit protein uL15 of Rickettsia prowazekii (strain Madrid E).